The primary structure comprises 488 residues: Ribulose bisphosphate carboxylase large chain (488 aa).

N127 and T177 together coordinate substrate. The active-site Proton acceptor is the K179. K181 lines the substrate pocket. K205, D207, and E208 together coordinate Mg(2+). K205 carries the N6-carboxylysine modification. The active-site Proton acceptor is the H297. Residues R298, H330, and S382 each coordinate substrate.

This sequence belongs to the RuBisCO large chain family. Type I subfamily. Heterohexadecamer of 8 large chains and 8 small chains. It depends on Mg(2+) as a cofactor.

Its subcellular location is the plastid. It localises to the chloroplast. The catalysed reaction is 2 (2R)-3-phosphoglycerate + 2 H(+) = D-ribulose 1,5-bisphosphate + CO2 + H2O. The enzyme catalyses D-ribulose 1,5-bisphosphate + O2 = 2-phosphoglycolate + (2R)-3-phosphoglycerate + 2 H(+). RuBisCO catalyzes two reactions: the carboxylation of D-ribulose 1,5-bisphosphate, the primary event in carbon dioxide fixation, as well as the oxidative fragmentation of the pentose substrate in the photorespiration process. Both reactions occur simultaneously and in competition at the same active site. This Porphyra purpurea (Red seaweed) protein is Ribulose bisphosphate carboxylase large chain.